Here is a 152-residue protein sequence, read N- to C-terminus: Perlwapin (152 aa).

Positions 1-18 (LILCVVVCTAAVLGTAAG) are cleaved as a signal peptide. The WAP 1 domain occupies 19–61 (YESQLPGCPPGAYPAICARYCYSDRDCASGYYCCNTGCLNICV). Intrachain disulfides connect Cys26/Cys52, Cys35/Cys56, Cys39/Cys51, Cys45/Cys60, Cys69/Cys95, Cys77/Cys100, Cys82/Cys94, Cys88/Cys103, Cys112/Cys139, Cys122/Cys142, Cys126/Cys138, and Cys132/Cys146. The WAP 2; atypical domain maps to 62-107 (PKPKPGLCPSITQSPCRGNVCNNDQDCPGNRKCCGKPGCKRCYRPK). Positions 108-150 (KPGSCPARKYEAGPCVVYCDGDFDCPGDKKCCGGCPRLCEKPC) constitute a WAP 3 domain.

Component of the acid-soluble and acid-insoluble organic matrix of prismatic shell layers (at protein level).

The protein resides in the secreted. Its function is as follows. Inhibits growth of calcium carbonate crystals. May inhibit growth of certain crystallographic planes in the mineral phase of nacre in the shell. This Haliotis asinina (Donkey's ear abalone) protein is Perlwapin.